The sequence spans 417 residues: UDP-N-acetylglucosamine 1-carboxyvinyltransferase (417 aa).

22-23 (KN) serves as a coordination point for phosphoenolpyruvate. Position 93 (Arg-93) interacts with UDP-N-acetyl-alpha-D-glucosamine. The active-site Proton donor is the Cys-117. Cys-117 carries the 2-(S-cysteinyl)pyruvic acid O-phosphothioketal modification. UDP-N-acetyl-alpha-D-glucosamine is bound by residues 122 to 126 (RPVDQ), Asp-305, and Ile-327.

Belongs to the EPSP synthase family. MurA subfamily.

The protein resides in the cytoplasm. The enzyme catalyses phosphoenolpyruvate + UDP-N-acetyl-alpha-D-glucosamine = UDP-N-acetyl-3-O-(1-carboxyvinyl)-alpha-D-glucosamine + phosphate. It participates in cell wall biogenesis; peptidoglycan biosynthesis. Its function is as follows. Cell wall formation. Adds enolpyruvyl to UDP-N-acetylglucosamine. The polypeptide is UDP-N-acetylglucosamine 1-carboxyvinyltransferase (Dechloromonas aromatica (strain RCB)).